A 249-amino-acid polypeptide reads, in one-letter code: tRNA (guanine-N(1)-)-methyltransferase (249 aa).

S-adenosyl-L-methionine-binding positions include Gly113 and 133-138; that span reads IGDFVV.

Belongs to the RNA methyltransferase TrmD family. As to quaternary structure, homodimer.

The protein resides in the cytoplasm. It carries out the reaction guanosine(37) in tRNA + S-adenosyl-L-methionine = N(1)-methylguanosine(37) in tRNA + S-adenosyl-L-homocysteine + H(+). In terms of biological role, specifically methylates guanosine-37 in various tRNAs. The protein is tRNA (guanine-N(1)-)-methyltransferase of Neisseria gonorrhoeae (strain ATCC 700825 / FA 1090).